Consider the following 293-residue polypeptide: Probable xyloglucan endotransglucosylase/hydrolase protein 7 (293 aa).

A signal peptide spans M1 to S29. The GH16 domain maps to R30–Y223. E109 functions as the Nucleophile in the catalytic mechanism. The active-site Proton donor is E113. A xyloglucan-binding site is contributed by E113. An N-linked (GlcNAc...) asparagine glycan is attached at N117. Xyloglucan-binding positions include Q126–N128, D136–E138, D202–W203, and G207. N-linked (GlcNAc...) asparagine glycosylation is present at N213. Intrachain disulfides connect C231–C239 and C276–C289. R281 is a binding site for xyloglucan.

This sequence belongs to the glycosyl hydrolase 16 family. XTH group 1 subfamily. Contains at least one intrachain disulfide bond essential for its enzymatic activity.

It localises to the secreted. It is found in the cell wall. The protein localises to the extracellular space. Its subcellular location is the apoplast. The catalysed reaction is breaks a beta-(1-&gt;4) bond in the backbone of a xyloglucan and transfers the xyloglucanyl segment on to O-4 of the non-reducing terminal glucose residue of an acceptor, which can be a xyloglucan or an oligosaccharide of xyloglucan.. Catalyzes xyloglucan endohydrolysis (XEH) and/or endotransglycosylation (XET). Cleaves and religates xyloglucan polymers, an essential constituent of the primary cell wall, and thereby participates in cell wall construction of growing tissues. In Arabidopsis thaliana (Mouse-ear cress), this protein is Probable xyloglucan endotransglucosylase/hydrolase protein 7 (XTH7).